We begin with the raw amino-acid sequence, 474 residues long: MNKKMFPKIYYYDQDFIDIYNKSLSWIQDKVILQKVADRGKKDKNYYSENCDYIDQMQACMSSFFLVYSNGEYSSTSAIDKFYQLQEESGAIRARYDNNNAIIDLDENEENIGFPIFAWAEYNLYHKTGNKKRISEVLPILDKYYKWIESKFLKENGLYSIDVNKIFYKNSPRVDAYYPIDFNSLQVHNAYCISKLADILNDKNLSLEYKKRFFSLKVKINSLMWSEKDGFYYDLDVNENILEIKTIVGFFPMLSEIPSEDRIERMIFYLKSTNHFGTPNPFPTLSVSEPGFSEDGNGYYGSVYTYMNFFVIKGLEYCGRANIAREFTIRHLYYILDTLMPFNKIKGHIWEAYRPMQEGPAYFDSNKKTYTEKGLICYLALFSISLMIENIIGLTISLPDKTVYWNIPTLEIMGIESLSLKKNQTTIICNKGKRGWEIKMESEKLYYFTINILNKKEKTLPIPSGRCSMLLDKL.

The helical transmembrane segment at 374-398 (GLICYLALFSISLMIENIIGLTISL) threads the bilayer.

The protein resides in the membrane. This is an uncharacterized protein from Borreliella burgdorferi (strain ATCC 35210 / DSM 4680 / CIP 102532 / B31) (Borrelia burgdorferi).